The sequence spans 700 residues: Calpain-2 catalytic subunit (700 aa).

Ala-2 carries the post-translational modification N-acetylalanine. A propeptide spans 2-19 (AGIAAKLAKDREAAEGLG) (anchors to the small subunit). The Calpain catalytic domain occupies 45 to 344 (LFQDPSFPAI…YSRLEICNLT (300 aa)). Residues Ile-89, Gly-91, and Asp-96 each contribute to the Ca(2+) site. Cys-105 is an active-site residue. The Ca(2+) site is built by Glu-175, Gln-229, and Lys-230. Active-site residues include His-262 and Asn-286. Ca(2+) contacts are provided by Glu-292, Asp-299, and Glu-323. A domain III region spans residues 345 to 514 (PDTLTSDTYK…KKADYQAVDD (170 aa)). A linker region spans residues 515–529 (EIEANLEEFDISEDD). The segment at 530 to 700 (IDDGFRRLFA…LISWLCFSVL (171 aa)) is domain IV. Residues Ala-542, Asp-545, Glu-547, Glu-552, Asp-585, Asp-587, Ser-589, Lys-591, Glu-596, Asp-615, Asp-617, Ser-619, Thr-621, Glu-626, Asp-658, and Asn-661 each contribute to the Ca(2+) site. 2 consecutive EF-hand domains span residues 572-605 (FSIE…TKIQ) and 602-637 (TKIQ…AGFK). In terms of domain architecture, EF-hand 3 spans 667–700 (VRLETLFKIFKQLDPENTGTIELDLISWLCFSVL).

It belongs to the peptidase C2 family. In terms of assembly, forms a heterodimer with a small (regulatory) subunit (CAPNS1). Interacts with CPEB3; this leads to cleavage of CPEB3. Interacts with PIDD1 alternative open reading frame protein altPIDD1. Requires Ca(2+) as cofactor. As to expression, ubiquitous.

Its subcellular location is the cytoplasm. It is found in the cell membrane. It carries out the reaction Broad endopeptidase specificity.. Activated by 200-1000 micromolar concentrations of calcium and inhibited by calpastatin. Its function is as follows. Calcium-regulated non-lysosomal thiol-protease which catalyzes limited proteolysis of substrates involved in cytoskeletal remodeling and signal transduction. Proteolytically cleaves MYOC at 'Arg-226'. Proteolytically cleaves CPEB3 following neuronal stimulation which abolishes CPEB3 translational repressor activity, leading to translation of CPEB3 target mRNAs. The protein is Calpain-2 catalytic subunit (CAPN2) of Homo sapiens (Human).